The chain runs to 500 residues: Glutelin type-B 5 (500 aa).

The N-terminal stretch at 1–24 (MATIAFSRLSIYFCVLLLCHGSMA) is a signal peptide. Disulfide bonds link Cys-45–Cys-78 and Cys-121–Cys-310. 2 consecutive Cupin type-1 domains span residues 50–245 (LQAF…LVAK) and 316–465 (LNIE…EQAR).

It belongs to the 11S seed storage protein (globulins) family. As to quaternary structure, hexamer; each subunit is composed of an acidic and a basic chain derived from a single precursor and linked by a disulfide bond.

Seed storage protein. The sequence is that of Glutelin type-B 5 (GLUB5) from Oryza sativa subsp. japonica (Rice).